The chain runs to 45 residues: Large ribosomal subunit protein bL34 (45 aa).

It belongs to the bacterial ribosomal protein bL34 family.

The protein is Large ribosomal subunit protein bL34 of Prochlorococcus marinus (strain MIT 9313).